Consider the following 422-residue polypeptide: D-amino acid dehydrogenase (422 aa).

An FAD-binding site is contributed by 3–17; that stretch reads VVVIGAGVVGTASAW.

This sequence belongs to the DadA oxidoreductase family. FAD is required as a cofactor.

It carries out the reaction a D-alpha-amino acid + A + H2O = a 2-oxocarboxylate + AH2 + NH4(+). The protein operates within amino-acid degradation; D-alanine degradation; NH(3) and pyruvate from D-alanine: step 1/1. Functionally, oxidative deamination of D-amino acids. The sequence is that of D-amino acid dehydrogenase from Paramagnetospirillum magneticum (strain ATCC 700264 / AMB-1) (Magnetospirillum magneticum).